A 1049-amino-acid chain; its full sequence is Self-sufficient cytochrome P450 monooxygenase CYP505E4 (1049 aa).

Cys405 is a heme binding site. Positions 461–470 (SATALSQHNM) are enriched in polar residues. The segment at 461-491 (SATALSQHNMSAGATASPGSSTHLAGDENGQ) is disordered. The span at 471-482 (SAGATASPGSST) shows a compositional bias: low complexity. A Flavodoxin-like domain is found at 499 to 640 (ISFFYGSNSG…DLEVWEETNL (142 aa)). Residues 505-509 (SNSGT) and 584-616 (VFGCGHQDWTKTFYRIPILIDDLMHKAGATRLT) contribute to the FMN site. In terms of domain architecture, FAD-binding FR-type spans 678 to 906 (RDLVEGKVTA…RPAKDAFHLP (229 aa)).

It in the N-terminal section; belongs to the cytochrome P450 family. Requires FAD as cofactor. The cofactor is FMN. Heme serves as cofactor.

The catalysed reaction is 2 oxidized [cytochrome P450] + NADPH = 2 reduced [cytochrome P450] + NADP(+) + H(+). It catalyses the reaction an organic molecule + reduced [NADPH--hemoprotein reductase] + O2 = an alcohol + oxidized [NADPH--hemoprotein reductase] + H2O + H(+). It carries out the reaction dodecanoate + reduced [NADPH--hemoprotein reductase] + O2 = 5-hydroxydodecanoate + oxidized [NADPH--hemoprotein reductase] + H2O + H(+). The enzyme catalyses dodecan-1-ol + reduced [NADPH--hemoprotein reductase] + O2 = 1,5-dodecanediol + oxidized [NADPH--hemoprotein reductase] + H2O + H(+). The catalysed reaction is dodecanoate + reduced [NADPH--hemoprotein reductase] + O2 = 9-hydroxydodecanoate + oxidized [NADPH--hemoprotein reductase] + H2O + H(+). It catalyses the reaction dodecan-1-ol + reduced [NADPH--hemoprotein reductase] + O2 = 1,4-dodecanediol + oxidized [NADPH--hemoprotein reductase] + H2O + H(+). It carries out the reaction dodecan-1-ol + reduced [NADPH--hemoprotein reductase] + O2 = 1,6-dodecanediol + oxidized [NADPH--hemoprotein reductase] + H2O + H(+). Functionally, self-sufficient cytochrome P450 monooxygenase that catalyzes the regioselective in-chain hydroxylation of alkanes, fatty alcohols, and fatty acids at the omega-7 position. Performs hydroxylation of C10-C16 n-alkanes and C12 and C14 fatty alcohols; and thereby enables the one step biocatalytic synthesis of rare alcohols such as 5-dodecanol and 7-tetradecanol. Converts 1-dodecanol into 1,5-dodecanediol as major product with very little sub-terminally hydroxylated products with the 1,4-dodecanediol and 1,6-dodecanediol more abundant. Converts dodecanoic acid to 5-hydroxydodecanoic acid which can be further converted into delta-dodecalactone by lactonization of the 5-hydroxy acid at low pH. Also gives sub-terminal hydroxylation of dodecanoic acid with 9-hydroxydodecanoic acid being the second most abundant product. Does not show any significant activity toward tetradecanoic acid. The protein is Self-sufficient cytochrome P450 monooxygenase CYP505E4 of Penicillium camemberti (strain FM 013).